A 616-amino-acid chain; its full sequence is MPKYRSATTTHGRNMAGARALWRATGMTDADFGKPIIAVVNSFTQFVPGHVHLRDLGKLVAEQIEAAGGVAKEFNTIAVDDGIAMGHGGMLYSLPSRELIADSVEYMVNAHCADAMVCISNCDKITPGMLMASLRLNIPVIFVSGGPMEAGKTKLSEQIIKLDLVDAMIQGADPKVSDSQSDQVERSACPTCGSCSGMFTANSMNCLTEALGLSQPGNGSLLATHADRKQLFLNAGKRIVELTKRYYEQNDESALPRNIASKAAFENAMTLDIAMGGSTNTVLHLLAAAQEAEIDFTMSDIDKLSRKVPQLCKVAPSTQKYHMEDVHRAGGVIGILGELDRAGLLNRDVKNVLGLTLPQTLEQYDVMLTQDDAVKNMFRAGPAGIRTTQAFSQDCRWDSLDDDRANGCIRSLEHAYSKDGGLAVLYGNFAENGCIVKTAGVDDSILKFTGPAKVYESQDDAVEAILGGKVVAGDVVVIRYEGPKGGPGMQEMLYPTSFLKSMGLGKACALITDGRFSGGTSGLSIGHVSPEAASGGSIGLIEDGDLIAIDIPNRGIQLQVSDAELAARREAQEARGDKAWTPKNRERQVSFALRAYASLATSADKGAVRDKSKLGG.

Asp-81 serves as a coordination point for Mg(2+). Cys-122 is a binding site for [2Fe-2S] cluster. Asp-123 and Lys-124 together coordinate Mg(2+). Position 124 is an N6-carboxylysine (Lys-124). Residue Cys-195 coordinates [2Fe-2S] cluster. Glu-491 contacts Mg(2+). Ser-517 acts as the Proton acceptor in catalysis.

Belongs to the IlvD/Edd family. In terms of assembly, homodimer. It depends on [2Fe-2S] cluster as a cofactor. Mg(2+) serves as cofactor.

It carries out the reaction (2R)-2,3-dihydroxy-3-methylbutanoate = 3-methyl-2-oxobutanoate + H2O. The catalysed reaction is (2R,3R)-2,3-dihydroxy-3-methylpentanoate = (S)-3-methyl-2-oxopentanoate + H2O. The protein operates within amino-acid biosynthesis; L-isoleucine biosynthesis; L-isoleucine from 2-oxobutanoate: step 3/4. It functions in the pathway amino-acid biosynthesis; L-valine biosynthesis; L-valine from pyruvate: step 3/4. Functionally, functions in the biosynthesis of branched-chain amino acids. Catalyzes the dehydration of (2R,3R)-2,3-dihydroxy-3-methylpentanoate (2,3-dihydroxy-3-methylvalerate) into 2-oxo-3-methylpentanoate (2-oxo-3-methylvalerate) and of (2R)-2,3-dihydroxy-3-methylbutanoate (2,3-dihydroxyisovalerate) into 2-oxo-3-methylbutanoate (2-oxoisovalerate), the penultimate precursor to L-isoleucine and L-valine, respectively. The polypeptide is Dihydroxy-acid dehydratase (Shigella sonnei (strain Ss046)).